The sequence spans 62 residues: Photosystem II reaction center protein Z (62 aa).

Helical transmembrane passes span 8–28 (SVFA…VVLA) and 41–61 (FSGA…NSLI).

This sequence belongs to the PsbZ family. PSII is composed of 1 copy each of membrane proteins PsbA, PsbB, PsbC, PsbD, PsbE, PsbF, PsbH, PsbI, PsbJ, PsbK, PsbL, PsbM, PsbT, PsbY, PsbZ, Psb30/Ycf12, at least 3 peripheral proteins of the oxygen-evolving complex and a large number of cofactors. It forms dimeric complexes.

The protein localises to the plastid. It localises to the chloroplast thylakoid membrane. Its function is as follows. May control the interaction of photosystem II (PSII) cores with the light-harvesting antenna, regulates electron flow through the 2 photosystem reaction centers. PSII is a light-driven water plastoquinone oxidoreductase, using light energy to abstract electrons from H(2)O, generating a proton gradient subsequently used for ATP formation. The polypeptide is Photosystem II reaction center protein Z (Psilotum nudum (Whisk fern)).